A 196-amino-acid chain; its full sequence is GTP cyclohydrolase 1 (196 aa).

Zn(2+) contacts are provided by Cys-86, His-89, and Cys-157.

It belongs to the GTP cyclohydrolase I family. As to quaternary structure, toroid-shaped homodecamer, composed of two pentamers of five dimers.

The catalysed reaction is GTP + H2O = 7,8-dihydroneopterin 3'-triphosphate + formate + H(+). It participates in cofactor biosynthesis; 7,8-dihydroneopterin triphosphate biosynthesis; 7,8-dihydroneopterin triphosphate from GTP: step 1/1. The polypeptide is GTP cyclohydrolase 1 (Parabacteroides distasonis (strain ATCC 8503 / DSM 20701 / CIP 104284 / JCM 5825 / NCTC 11152)).